A 172-amino-acid chain; its full sequence is Diphosphoinositol polyphosphate phosphohydrolase 1 (172 aa).

M1 is subject to N-acetylmethionine. Residues R10, 18 to 20, and 39 to 41 contribute to the substrate site; these read KKR and SSR. The region spanning 17 to 142 is the Nudix hydrolase domain; the sequence is YKKRAACLCF…KPVQASYFET (126 aa). Mg(2+) contacts are provided by G50 and E66. Residues 51-72 carry the Nudix box motif; it reads GGMEPEEEPSVAAVREVCEEAG. E69 functions as the Proton acceptor in the catalytic mechanism. A Mg(2+)-binding site is contributed by E70. Substrate contacts are provided by residues 89 to 91, R115, and K133; that span reads RKH.

Belongs to the Nudix hydrolase family. DIPP subfamily. Monomer. Mg(2+) serves as cofactor. Mn(2+) is required as a cofactor. Requires Zn(2+) as cofactor. As to expression, widely expressed. Expressed at higher level in brain, heart, pancreas and liver. Also expressed in placenta, lung and kidney.

Its subcellular location is the cytoplasm. It is found in the nucleus. The catalysed reaction is diphospho-myo-inositol polyphosphate + H2O = myo-inositol polyphosphate + phosphate.. The enzyme catalyses 5-diphospho-1D-myo-inositol 1,2,3,4,6-pentakisphosphate + H2O = 1D-myo-inositol hexakisphosphate + phosphate + H(+). It carries out the reaction 3,5-bis(diphospho)-1D-myo-inositol 1,2,4,6-tetrakisphosphate + H2O = 3-diphospho-1D-myo-inositol 1,2,4,5,6-pentakisphosphate + phosphate + 2 H(+). It catalyses the reaction [phosphate](n+1) + n H2O = (n+1) phosphate + n H(+). The catalysed reaction is P(1),P(5)-bis(5'-adenosyl) pentaphosphate + H2O = ADP + ATP + 2 H(+). The enzyme catalyses P(1),P(6)-bis(5'-adenosyl) hexaphosphate + H2O = 2 ATP + 2 H(+). It carries out the reaction P(1),P(4)-bis(5'-adenosyl) tetraphosphate + H2O = AMP + ATP + 2 H(+). It catalyses the reaction a 5'-end (N(7)-methyl 5'-triphosphoguanosine)-ribonucleoside in mRNA + H2O = N(7)-methyl-GMP + a 5'-end diphospho-ribonucleoside in mRNA + 2 H(+). The catalysed reaction is a 5'-end (N(7)-methyl 5'-triphosphoguanosine)-ribonucleoside in mRNA + H2O = N(7)-methyl-GDP + a 5'-end phospho-ribonucleoside in mRNA + 2 H(+). Endopolyphospahatase activity is inhibited by NaF, NaPPi, beta-glycerol phosphate and heparin. 5-diphosphoinositol pentakisphosphate (5-InsP7) inhibits its mRNA decapping activity. Functionally, cleaves a beta-phosphate from the diphosphate groups in PP-InsP5 (diphosphoinositol pentakisphosphate) and [PP]2-InsP4 (bisdiphosphoinositol tetrakisphosphate), suggesting that it may play a role in signal transduction. InsP6 (inositol hexakisphosphate) is not a substrate. Acts as a negative regulator of the ERK1/2 pathway. Also able to catalyze the hydrolysis of dinucleoside oligophosphates, with diadenosine 5',5'''-P1,P6-hexaphosphate (Ap6A) and diadenosine 5',5'''- P1,P5-pentaphosphate (Ap5A) being the preferred substrates. The major reaction products are ADP and p4a from Ap6A and ADP and ATP from Ap5A. Also able to hydrolyze 5-phosphoribose 1-diphosphate. Acts as a decapping enzyme that modulates the stability of a subset of mRNAs implicated in cell motility. Hydrolyzes monomethylated capped RNA after both the alpha- and beta-phosphates generating m7GMP + ppRNA and m7GDP + pRNA. Can hydrolyze unmethylated capped RNAs. Divalent cations zinc, magnesium and manganese determine its substrate specificity. Exhibits diphosphoinositol polyphosphate phosphohydrolase in the presence of magnesium ions, diadenosine hexaphosphate hydrolase activity in the presence of manganese ions and endopolyphosphatase activity in the presence of zinc ions. Plays an important role in limiting DNA damage and maintaining cell survival upon oxidative stress via its endopolyphosphatase activity. This Homo sapiens (Human) protein is Diphosphoinositol polyphosphate phosphohydrolase 1.